Consider the following 601-residue polypeptide: Probable HECT-type ubiquitin ligase-interacting protein creD (601 aa).

Disordered regions lie at residues 374 to 397 and 454 to 496; these read EVDP…GTLS and VSTD…GMAT. The span at 455-473 shows a compositional bias: low complexity; sequence STDSFGPSSGSNSQSPASP. Positions 475–489 are enriched in basic and acidic residues; that stretch reads LSRRPSDEGYHDHDY.

Belongs to the arrestin family. In terms of assembly, interacts with hulA.

Component of the regulatory network controlling carbon source utilization through ubiquitination and deubiquitination involving creA, creB, creC, creD and acrB. May be involved in signaling by recognizing appropriately phosphorylated substrates via its arrestin domains and then recruit a HECT-type ubiquitin ligase such as hulA, leading to ubiquitination of the substrate, providing a link between ubiquitination and phosphorylation in protein regulation and stability. The polypeptide is Probable HECT-type ubiquitin ligase-interacting protein creD (creD) (Aspergillus fumigatus (strain CBS 144.89 / FGSC A1163 / CEA10) (Neosartorya fumigata)).